Consider the following 645-residue polypeptide: Sodium/potassium/calcium exchanger 3 (645 aa).

The first 43 residues, 1-43 (MPPPGDQDCARRRSRRRRRDLLLSQLCFLASVALLLWSLSSLR), serve as a signal peptide directing secretion. Topologically, residues 44–106 (EQKELDLMDL…DIFSNEDRRQ (63 aa)) are extracellular. N-linked (GlcNAc...) asparagine glycosylation is found at Asn70 and Asn85. The chain crosses the membrane as a helical span at residues 107–127 (GAVVLHVLCAMYMFYALAIVC). The Cytoplasmic portion of the chain corresponds to 128-151 (DDFFVPSLEKICERLHLSEDVAGA). The stretch at 148–188 (VAGATFMAAGSSAPELFTSVIGVFITKGDVGVGTIVGSAVF) is one Alpha-1 repeat. Residues 152 to 172 (TFMAAGSSAPELFTSVIGVFI) form a helical membrane-spanning segment. The Extracellular segment spans residues 173–181 (TKGDVGVGT). The helical transmembrane segment at 182 to 202 (IVGSAVFNILCIIGVCGLFAG) threads the bilayer. The Cytoplasmic portion of the chain corresponds to 203-209 (QVVALSS). Residues 210–230 (WCLLRDSIYYTLSVVALIVFI) traverse the membrane as a helical segment. The Extracellular segment spans residues 231 to 234 (YDEK). The chain crosses the membrane as a helical span at residues 235 to 255 (VSWWESLVLVLMYLIYIVIMK). Over 256–486 (YNACIHQCFE…WFMVTFASST (231 aa)) the chain is Cytoplasmic. Ser307 is subject to Phosphoserine. Disordered stretches follow at residues 379–398 (TVEN…NGTR) and 404–442 (AETD…PFDP). Residues 404–435 (AETDNETENENEDNENNENDEEEEEDEDDDEG) are compositionally biased toward acidic residues. The helical transmembrane segment at 487–507 (LWIAAFSYMMVWMVTIIGYTL) threads the bilayer. Residues 508–512 (GIPDV) are Extracellular-facing. Residues 513–533 (IMGITFLAAGTSVPDCMASLI) form a helical membrane-spanning segment. The Alpha-2 repeat unit spans residues 520-551 (AAGTSVPDCMASLIVARQGMGDMAVSNSIGSN). Topologically, residues 534–551 (VARQGMGDMAVSNSIGSN) are cytoplasmic. A helical transmembrane segment spans residues 552 to 572 (VFDILIGLGLPWALQTLAVDY). The Extracellular segment spans residues 573-582 (GSYIRLNSRG). A helical membrane pass occupies residues 583–603 (LIYSVGLLLASVFVTVFGVHL). Topologically, residues 604 to 617 (NKWQLDKKLGCGCL) are cytoplasmic. The helical transmembrane segment at 618–638 (FLYGVFLCFSIMTEFNVFTFV) threads the bilayer. Over 639 to 645 (NLPMCGD) the chain is Extracellular.

This sequence belongs to the Ca(2+):cation antiporter (CaCA) (TC 2.A.19) family. SLC24A subfamily. In terms of tissue distribution, abundant in the brain. Highest levels found in selected thalamic nuclei, hippocampal CA1 neurons and in layer IV of the cerebral cortex. Expressed in dental tissues.

The protein localises to the cell membrane. It carries out the reaction Ca(2+)(out) + K(+)(out) + 4 Na(+)(in) = Ca(2+)(in) + K(+)(in) + 4 Na(+)(out). Functionally, calcium, potassium:sodium antiporter that transports 1 Ca(2+) and 1 K(+) in exchange for 4 Na(+). In Mus musculus (Mouse), this protein is Sodium/potassium/calcium exchanger 3 (Slc24a3).